Here is a 310-residue protein sequence, read N- to C-terminus: Glutaminase (310 aa).

The substrate site is built by Ser-66, Asn-117, Glu-161, Asn-168, Tyr-192, Tyr-244, and Val-262.

It belongs to the glutaminase family. Homotetramer.

The catalysed reaction is L-glutamine + H2O = L-glutamate + NH4(+). This Desulfovibrio desulfuricans (strain ATCC 27774 / DSM 6949 / MB) protein is Glutaminase.